The chain runs to 352 residues: Photosystem II D2 protein (352 aa).

T2 is subject to N-acetylthreonine. At T2 the chain carries Phosphothreonine. Residues 40–60 form a helical membrane-spanning segment; sequence CAYFAVGGWLTGTTFVTSWYT. Position 117 (H117) interacts with chlorophyll a. A helical membrane pass occupies residues 124 to 140; it reads GFMLRQFEIARAIGLRP. Pheophytin a contacts are provided by Q129 and N142. Residues 152-165 form a helical membrane-spanning segment; the sequence is VFVSVFLIYPLGQS. Residue H197 participates in chlorophyll a binding. Residues 207-227 traverse the membrane as a helical segment; it reads AALLCAIHGATVENTLFEDGD. Residues H214 and F261 each contribute to the a plastoquinone site. Residue H214 coordinates Fe cation. Residue H268 participates in Fe cation binding. The chain crosses the membrane as a helical span at residues 278–294; sequence GLWMSAIGVVGLALNLR.

It belongs to the reaction center PufL/M/PsbA/D family. In terms of assembly, PSII is composed of 1 copy each of membrane proteins PsbA, PsbB, PsbC, PsbD, PsbE, PsbF, PsbH, PsbI, PsbJ, PsbK, PsbL, PsbM, PsbT, PsbX, PsbY, PsbZ, Psb30/Ycf12, at least 3 peripheral proteins of the oxygen-evolving complex and a large number of cofactors. It forms dimeric complexes. Requires The D1/D2 heterodimer binds P680, chlorophylls that are the primary electron donor of PSII, and subsequent electron acceptors. It shares a non-heme iron and each subunit binds pheophytin, quinone, additional chlorophylls, carotenoids and lipids. There is also a Cl(-1) ion associated with D1 and D2, which is required for oxygen evolution. The PSII complex binds additional chlorophylls, carotenoids and specific lipids. as cofactor.

The protein localises to the plastid. It is found in the chloroplast thylakoid membrane. The catalysed reaction is 2 a plastoquinone + 4 hnu + 2 H2O = 2 a plastoquinol + O2. Its function is as follows. Photosystem II (PSII) is a light-driven water:plastoquinone oxidoreductase that uses light energy to abstract electrons from H(2)O, generating O(2) and a proton gradient subsequently used for ATP formation. It consists of a core antenna complex that captures photons, and an electron transfer chain that converts photonic excitation into a charge separation. The D1/D2 (PsbA/PsbD) reaction center heterodimer binds P680, the primary electron donor of PSII as well as several subsequent electron acceptors. D2 is needed for assembly of a stable PSII complex. The polypeptide is Photosystem II D2 protein (Nephroselmis olivacea (Green alga)).